Here is a 116-residue protein sequence, read N- to C-terminus: Mercuric transport protein MerT (116 aa).

Transmembrane regions (helical) follow at residues 16-36 (LAAI…ALGF) and 46-66 (VLEP…FFAW). Residues cysteine 24 and cysteine 25 each coordinate Hg(2+). Hg(2+) is bound by residues cysteine 76 and cysteine 82. Residues 94–114 (IFWFVAVLVLVALGFPYVMPF) form a helical membrane-spanning segment.

This sequence belongs to the MerT family.

The protein resides in the cell inner membrane. In terms of biological role, involved in mercury resistance. Probably transfers a mercuric ion from the periplasmic Hg(2+)-binding protein MerP to the cytoplasmic mercuric reductase MerA. In Acinetobacter calcoaceticus, this protein is Mercuric transport protein MerT.